Here is a 205-residue protein sequence, read N- to C-terminus: Methylthioribulose-1-phosphate dehydratase (205 aa).

Positions 94 and 96 each coordinate Zn(2+).

Belongs to the aldolase class II family. MtnB subfamily. It depends on Zn(2+) as a cofactor.

The enzyme catalyses 5-(methylsulfanyl)-D-ribulose 1-phosphate = 5-methylsulfanyl-2,3-dioxopentyl phosphate + H2O. Its pathway is amino-acid biosynthesis; L-methionine biosynthesis via salvage pathway; L-methionine from S-methyl-5-thio-alpha-D-ribose 1-phosphate: step 2/6. In terms of biological role, catalyzes the dehydration of methylthioribulose-1-phosphate (MTRu-1-P) into 2,3-diketo-5-methylthiopentyl-1-phosphate (DK-MTP-1-P). The protein is Methylthioribulose-1-phosphate dehydratase of Pectobacterium carotovorum subsp. carotovorum (strain PC1).